Here is a 336-residue protein sequence, read N- to C-terminus: MASSSRPKTDVLVGGRYKLVREIGFGSFGHVYLAIDLTNHEQVAVKLESENTRQPRLLHEKELYNFLQGGVGIPQIRWYGQETDYNVLVMDLLGPSLEDLFNFCSRRFSMKTVLMLADQMISRIEYVHSRNLIHRDIKPDNFLMGTGPQWKKLFLVDFGLAKKYRDNRTGQHIPHRSGKSFIGTPFCASISAHLGIEQSRRDDMESIGYVLMYFNRGSLPWQGLKAATLKQKCEKISEMKMTTPVDVLCKGFPIEFAMYLKYCLRLSFEEAPDYRYLRQLFRLLFRKLSYQHDYAFDWIVLKQKAEQQASSSSGEGQQAQTPTGKSDNTKSEMKHS.

The Protein kinase domain occupies Tyr17–Phe285. ATP is bound by residues Ile23–Val31 and Lys46. Residue Asp136 is the Proton acceptor of the active site. Residues Ala309–Gln320 are compositionally biased toward low complexity. A disordered region spans residues Ala309–Ser336. The span at Asp327 to Ser336 shows a compositional bias: basic and acidic residues.

This sequence belongs to the protein kinase superfamily. CK1 Ser/Thr protein kinase family. Casein kinase I subfamily. In terms of assembly, monomer.

The protein resides in the cytoplasm. It catalyses the reaction L-seryl-[protein] + ATP = O-phospho-L-seryl-[protein] + ADP + H(+). The catalysed reaction is L-threonyl-[protein] + ATP = O-phospho-L-threonyl-[protein] + ADP + H(+). Casein kinases are operationally defined by their preferential utilization of acidic proteins such as caseins as substrates. It can phosphorylate a large number of proteins. Participates in Wnt signaling. This chain is Casein kinase I isoform beta (CSNK1B), found in Bos taurus (Bovine).